A 580-amino-acid polypeptide reads, in one-letter code: Arginine--tRNA ligase (580 aa).

Residues 131-141 (ANPTGPMHVGH) carry the 'HIGH' region motif.

This sequence belongs to the class-I aminoacyl-tRNA synthetase family. As to quaternary structure, monomer.

The protein localises to the cytoplasm. The enzyme catalyses tRNA(Arg) + L-arginine + ATP = L-arginyl-tRNA(Arg) + AMP + diphosphate. This Cereibacter sphaeroides (strain ATCC 17023 / DSM 158 / JCM 6121 / CCUG 31486 / LMG 2827 / NBRC 12203 / NCIMB 8253 / ATH 2.4.1.) (Rhodobacter sphaeroides) protein is Arginine--tRNA ligase.